Here is a 309-residue protein sequence, read N- to C-terminus: Protease HtpX homolog (309 aa).

2 helical membrane-spanning segments follow: residues 15 to 35 and 54 to 74; these read NAVL…VDVI and IFPT…VVCI. His165 contributes to the Zn(2+) binding site. Glu166 is a catalytic residue. His169 serves as a coordination point for Zn(2+). 2 helical membrane passes run 181 to 201 and 213 to 233; these read VGIL…FFMG and MILL…QMYL. Zn(2+) is bound at residue Glu238.

Belongs to the peptidase M48B family. Zn(2+) serves as cofactor.

The protein localises to the cell inner membrane. The polypeptide is Protease HtpX homolog (Helicobacter acinonychis (strain Sheeba)).